The chain runs to 157 residues: Transcription elongation factor GreB (157 aa).

The stretch at 52 to 73 (KKLLREIDRRVRYLRKRLEDMR) forms a coiled coil.

The protein belongs to the GreA/GreB family. GreB subfamily.

Its function is as follows. Necessary for efficient RNA polymerase transcription elongation past template-encoded arresting sites. The arresting sites in DNA have the property of trapping a certain fraction of elongating RNA polymerases that pass through, resulting in locked ternary complexes. Cleavage of the nascent transcript by cleavage factors such as GreA or GreB allows the resumption of elongation from the new 3'terminus. GreB releases sequences of up to 9 nucleotides in length. The protein is Transcription elongation factor GreB of Pseudomonas syringae pv. tomato (strain ATCC BAA-871 / DC3000).